Reading from the N-terminus, the 155-residue chain is Protein phosphatase 1 regulatory subunit 17 (155 aa).

The disordered stretch occupies residues 41 to 73 (KKKPRKGKNVQATLNVESDQKKPRRKDTPALHI). Residues 58-69 (SDQKKPRRKDTP) are compositionally biased toward basic and acidic residues. Residues Thr-68 and Thr-119 each carry the phosphothreonine; by PKG/PRKG1 modification.

Substrate for cGMP-dependent protein kinase. Phosphorylated by PRKG1 isoform alpha. Phosphorylation of Thr-68 and Thr-119 is required for its phosphatase activity. In terms of processing, substrate for cGMP-dependent protein kinase. In terms of tissue distribution, highly expressed in cerebellum.

Inhibits phosphatase activities of protein phosphatase 1 (PP1) and protein phosphatase 2A (PP2A) complexes. The sequence is that of Protein phosphatase 1 regulatory subunit 17 (PPP1R17) from Homo sapiens (Human).